The sequence spans 666 residues: MRKINLLDLETTNKIAAGEVIERPFSVVKELVENSIDAGAKNITIEIEDGGQKLIKIIDDGEGIYPIDIKNAFLPHATSKINSIEDIYKISTMGFRGEALASISSVSKTKLKSRVDSYNFGKEIYIEGGKIEYLKDTGCNVGTTIEVSDLFYNVPARLKFLKSARSDSSSISDIVNRFILAHPDISFNLINKGKQSIKSYGTGNLKDSIRCVYNKTISENLINFESHKDIISVYGFIGKTEISRKSRTNQSIFVNKRYVKSKFITAAVENAFKSFLTVNSYPFFVIFIDIFPEYIDVNVHPTKSEVKFKDERAMFKTIFDAVHEAIKGELKESFTNFFNKEDINIYDSEKSITEPIKLEKEEVQIPIDLNSNNKIDIFGNNINKLPNNTELLKNIGVKAKNTLENNNDFYTSKQNEIYYANKNDECLNSCNKDNYSKIEKSLQKDNKNPDTLYLNEHNTNSSSINIKENKPNNFYVDMKIIGQFNNTYILIEKDKELYIIDQHAAHEKVLFEKFKSEIEKGYVISQILLSPVVIELSEDEFNIYEENKDIFKNSGFSVETFGEYTINIKEVPLILGKPNVENLFMDILYNLKNMKSKETSTIKYNAIATLACKSAVKANDNLKEEEIKKLIEDMLILNNPYTCPHGRPTMIKFTLKDLEKKFKRIQ.

The protein belongs to the DNA mismatch repair MutL/HexB family.

This protein is involved in the repair of mismatches in DNA. It is required for dam-dependent methyl-directed DNA mismatch repair. May act as a 'molecular matchmaker', a protein that promotes the formation of a stable complex between two or more DNA-binding proteins in an ATP-dependent manner without itself being part of a final effector complex. In Clostridium botulinum (strain Okra / Type B1), this protein is DNA mismatch repair protein MutL.